A 574-amino-acid chain; its full sequence is Sorting nexin-33 (574 aa).

The 61-residue stretch at 1 to 61 folds into the SH3 domain; that stretch reads MALKGRALYD…PASYVEIVRP (61 aa). Position 77 is a phosphoserine (Ser-77). The segment covering 79–90 has biased composition (polar residues); sequence GTQGSLYSSPSM. Positions 79–116 are disordered; the sequence is GTQGSLYSSPSMASPARSGGGSGFLSNPGSFEDDDDDD. Phosphoserine is present on Ser-92. In terms of domain architecture, PX spans 230-340; it reads FACSIEDPTK…HFLSCLDDKQ (111 aa). A BAR domain is found at 371 to 574; the sequence is LQDVEDRVDT…EKTLHMYDHL (204 aa).

Belongs to the sorting nexin family. As to quaternary structure, homodimer (via BAR domain). Interacts with ADAM15. Interacts with FASLG. Interacts (via SH3 domain) with DNM1 and DNM2. Interacts with WASL. Interacts with FCHSD1 (via the F-BAR domain). Post-translationally, phosphorylated. In terms of tissue distribution, detected in brain (at protein level).

Its subcellular location is the cytoplasm. The protein localises to the cytosol. It localises to the membrane. The protein resides in the cytoplasmic vesicle membrane. In terms of biological role, plays a role in the reorganization of the cytoskeleton, endocytosis and cellular vesicle trafficking via its interactions with membranes, WASL, DNM1 and DNM2. Acts both during interphase and at the end of mitotic cell divisions. Required for efficient progress through mitosis and cytokinesis. Required for normal formation of the cleavage furrow at the end of mitosis. Modulates endocytosis of cell-surface proteins, such as APP and PRNP; this then modulates the secretion of APP and PRNP peptides. Promotes membrane tubulation (in vitro). May promote the formation of macropinosomes. This is Sorting nexin-33 (Snx33) from Mus musculus (Mouse).